The chain runs to 251 residues: CDP-diacylglycerol pyrophosphatase (251 aa).

The chain crosses the membrane as a helical span at residues 4-24; sequence AGLLFLVMIVIAVVATGIGYW.

The protein belongs to the Cdh family.

The protein localises to the cell inner membrane. The catalysed reaction is a CDP-1,2-diacyl-sn-glycerol + H2O = a 1,2-diacyl-sn-glycero-3-phosphate + CMP + 2 H(+). The protein operates within phospholipid metabolism; CDP-diacylglycerol degradation; phosphatidate from CDP-diacylglycerol: step 1/1. The sequence is that of CDP-diacylglycerol pyrophosphatase from Escherichia coli O45:K1 (strain S88 / ExPEC).